A 2286-amino-acid polypeptide reads, in one-letter code: Unconventional myosin-IXAb (2286 aa).

One can recognise a Ras-associating domain in the interval 16-114 (SEFTLRVYPG…YRFLLREKNL (99 aa)). Residues 148–971 (AQFVADLCSL…LRQRLQDELH (824 aa)) enclose the Myosin motor domain. Residues 178 to 198 (IYTYVGSILIAVNPFKFLPIY) traverse the membrane as a helical segment. 242–249 (GESGSGKT) contacts ATP. An actin-binding region spans residues 853-875 (LNKLMETLGQSEPYFVKCIRSNA). IQ domains are found at residues 976-996 (RRIV…HFCR), 1025-1054 (QQGA…AVLI), 1066-1095 (RNTA…AAVT), and 1089-1118 (QRRA…QQCR). The neck or regulatory domain stretch occupies residues 976–1113 (RRIVCLQRSF…QSRQRCRILR (138 aa)). The tail stretch occupies residues 1114–2254 (EQQCREQSKH…PRANRSCPPK (1141 aa)). 4 disordered regions span residues 1118–1279 (REQS…QIRE), 1308–1341 (DVPL…FSVS), 1455–1588 (CEED…EPML), and 1732–1754 (DGTI…SDTV). Over residues 1123 to 1133 (HPSTVTKSLHQ) the composition is skewed to polar residues. The segment covering 1134–1149 (NTEEAEKLEEVWEKQT) has biased composition (basic and acidic residues). The segment covering 1263–1273 (PINSAPQTPNR) has biased composition (polar residues). Residues 1455–1465 (CEEDEDDEYED) are compositionally biased toward acidic residues. Residues 1485–1501 (CVFHSDSEMSSQKEQKR) show a composition bias toward basic and acidic residues. A compositionally biased stretch (basic residues) spans 1529 to 1542 (RGKMRFWSKSKHGD). Composition is skewed to basic and acidic residues over residues 1550-1562 (RSAD…RRND) and 1572-1585 (GVSE…ENRE). The Phorbol-ester/DAG-type zinc-finger motif lies at 1759–1808 (GHIFKSTQYSIPTYCEFCSSLIWMMDKACVCKLCRYACHKKCCLRMTTKC). Positions 1823 to 2011 (VELSRLTSDE…LIICEQMRKY (189 aa)) constitute a Rho-GAP domain. Over residues 2032–2049 (LTHIRRSMGKSRARKSGH) the composition is skewed to basic residues. Disordered regions lie at residues 2032 to 2087 (LTHI…QQEE) and 2113 to 2286 (PRAS…EFMV). Residues 2080 to 2107 (QAAMQQEEKVLTQQIENLQKEKEELTYE) are a coiled coil. Composition is skewed to low complexity over residues 2176-2192 (SLDS…SVSS) and 2200-2211 (SSSSGPLFSSSS). The span at 2226–2238 (EQASLSARCASSS) shows a compositional bias: polar residues. Residues 2254-2270 (KPREPGDTGGRRREHEF) are compositionally biased toward basic and acidic residues.

The protein belongs to the TRAFAC class myosin-kinesin ATPase superfamily. Myosin family.

Its subcellular location is the membrane. It is found in the cytoplasm. The protein localises to the synapse. It localises to the cell projection. The protein resides in the growth cone. Functionally, myosins are actin-based motor molecules with ATPase activity. Unconventional myosins serve in intracellular movements. Regulates Rho by stimulating it's GTPase activity in neurons. Required for the regulation of neurite branching and motor neuron axon guidance. The chain is Unconventional myosin-IXAb (myo9ab) from Danio rerio (Zebrafish).